Reading from the N-terminus, the 432-residue chain is UDP-N-acetylglucosamine 1-carboxyvinyltransferase (432 aa).

22-23 serves as a coordination point for phosphoenolpyruvate; it reads KN. Position 102 (Arg102) interacts with UDP-N-acetyl-alpha-D-glucosamine. Cys126 acts as the Proton donor in catalysis. At Cys126 the chain carries 2-(S-cysteinyl)pyruvic acid O-phosphothioketal. UDP-N-acetyl-alpha-D-glucosamine-binding positions include 131 to 135, Asp317, and Ile339; that span reads RPVDL.

The protein belongs to the EPSP synthase family. MurA subfamily.

Its subcellular location is the cytoplasm. The catalysed reaction is phosphoenolpyruvate + UDP-N-acetyl-alpha-D-glucosamine = UDP-N-acetyl-3-O-(1-carboxyvinyl)-alpha-D-glucosamine + phosphate. The protein operates within cell wall biogenesis; peptidoglycan biosynthesis. Its function is as follows. Cell wall formation. Adds enolpyruvyl to UDP-N-acetylglucosamine. This Rhodospirillum centenum (strain ATCC 51521 / SW) protein is UDP-N-acetylglucosamine 1-carboxyvinyltransferase.